The sequence spans 297 residues: Formylmethanofuran--tetrahydromethanopterin formyltransferase (297 aa).

The protein belongs to the FTR family. As to quaternary structure, homotetramer.

The protein localises to the cytoplasm. It catalyses the reaction N-formylmethanofuran + 5,6,7,8-tetrahydromethanopterin + H(+) = N(5)-formyl-5,6,7,8-tetrahydromethanopterin + methanofuran. The protein operates within one-carbon metabolism; methanogenesis from CO(2); 5,10-methenyl-5,6,7,8-tetrahydromethanopterin from CO(2): step 2/3. Functionally, catalyzes the reversible transfer of a formyl group from formylmethanofuran (formyl-MFR) to tetrahydromethanopterin (H(4)MPT) to produce 5-formyl tetrahydromethanopterin (5-formyl-H(4)MPT) and methanofuran (MFR). This chain is Formylmethanofuran--tetrahydromethanopterin formyltransferase, found in Methanothermus fervidus (strain ATCC 43054 / DSM 2088 / JCM 10308 / V24 S).